The following is a 247-amino-acid chain: tRNA uridine(34) hydroxylase (247 aa).

A Rhodanese domain is found at 123–217; that stretch reads ITKQDVIVDT…YLEDTQNKNN (95 aa). The active-site Cysteine persulfide intermediate is the Cys-177.

This sequence belongs to the TrhO family.

It catalyses the reaction uridine(34) in tRNA + AH2 + O2 = 5-hydroxyuridine(34) in tRNA + A + H2O. In terms of biological role, catalyzes oxygen-dependent 5-hydroxyuridine (ho5U) modification at position 34 in tRNAs. The protein is tRNA uridine(34) hydroxylase of Rickettsia bellii (strain RML369-C).